The sequence spans 347 residues: Merozoite surface protein 2 (347 aa).

The signal sequence occupies residues 1–20 (MKVIKTLSIINFFIFVTFNI). Asn-22 and Asn-36 each carry an N-linked (GlcNAc...) asparagine glycan. The polymorphic region stretch occupies residues 44–273 (AESKPPTGDG…EQTESPELQS (230 aa)). A run of 22 repeats spans residues 53–60 (GAVASAGN), 61–68 (GAVASAGN), 69–76 (GAVASAGN), 77–84 (GAVASAGN), 85–88 (GAGN), 89–92 (GAGN), 93–96 (GAGN), 97–100 (GAGN), 101–104 (GAGN), 105–108 (GAGN), 109–112 (GAGN), 113–116 (GAGN), 117–120 (GAGN), 121–124 (GAGN), 125–128 (GAGN), 129–132 (GAGN), 133–136 (GAGN), 137–140 (GAGN), 141–144 (GAGN), 145–152 (GAVASAGN), 153–156 (GAGN), and 157–164 (GAVASAGN). A 6 X 8 AA repeats of G-A-V-A-S-A-G-N region spans residues 53 to 164 (GAVASAGNGA…GNGAVASAGN (112 aa)). The segment at 85-156 (GAGNGAGNGA…VASAGNGAGN (72 aa)) is 16 X 4 AA repeats of G-A-G-N. Residues 165–206 (GAVAERSSSTPATTTTTTTTNDAEASTSTSSENSNHNNAETN) show a composition bias toward low complexity. The interval 165–308 (GAVAERSSST…DSQKECTDGN (144 aa)) is disordered. Polar residues-rich tracts occupy residues 213–240 (VQPN…NVPR) and 247–275 (KSPT…QSAP). N-linked (GlcNAc...) asparagine glycosylation is present at Asn-224. Asn-296 carries N-linked (GlcNAc...) asparagine glycosylation. Residues Cys-304 and Cys-312 are joined by a disulfide bond. N-linked (GlcNAc...) asparagine glycans are attached at residues Asn-320 and Asn-321. Asn-321 carries the GPI-anchor amidated asparagine lipid modification. Positions 322 to 347 (SSNIASINKFVVLISATLVLSFAIFI) are cleaved as a propeptide — removed in mature form.

The protein resides in the cell membrane. In terms of biological role, may play a role in the merozoite attachment to the erythrocyte. This is Merozoite surface protein 2 from Plasmodium falciparum (isolate Nig32 / Nigeria).